We begin with the raw amino-acid sequence, 193 residues long: Recombination protein RecR (193 aa).

The C4-type zinc finger occupies 61-76 (CSSCNALSESEVCEIC). One can recognise a Toprim domain in the interval 84 to 170 (SQLCMVLHPR…TFTKIAQGVP (87 aa)).

It belongs to the RecR family.

Functionally, may play a role in DNA repair. It seems to be involved in an RecBC-independent recombinational process of DNA repair. It may act with RecF and RecO. This is Recombination protein RecR from Helicobacter pylori (strain P12).